We begin with the raw amino-acid sequence, 1163 residues long: E3 ubiquitin-protein ligase TRIM33 (1163 aa).

The disordered stretch occupies residues 1–119 (MEVEASGTED…ASTSSSSSTP (119 aa)). Over residues 27–38 (TETKEAADEAKS) the composition is skewed to basic and acidic residues. The span at 45-54 (TPTTSSDSSS) shows a compositional bias: low complexity. Residues 72–87 (DPPPPPPPPPPPPPST) are compositionally biased toward pro residues. The segment covering 88–99 (PADSTAAAASPA) has biased composition (low complexity). Residues 129–188 (CAVCKQSLQNRDCEPKLLPCLHSFCLKCIPQPDRKITMPVQGPHGQDTRIVNVMRCTVCH) form an RING-type zinc finger. Residues 215 to 268 (NSTQVCTSCEDNASAIGFCVECGEWLCKTCIEAHQRVKFTKDHKIRKKEEVSPE) form a B box-type 1; atypical zinc finger. 8 residues coordinate Zn(2+): Cys220, Cys223, Cys244, His257, Cys280, His283, Cys303, and His308. The segment at 275–316 (QRPVFCPVHKQEALKLFCETCDTLTCRDCQLLEHKEHRYQFL) adopts a B box-type 2 zinc-finger fold. The stretch at 345–369 (ASEVQKRLKEVAETHKKVEHEIKIA) forms a coiled coil. The segment covering 524 to 533 (MQQAAIAQKH) has biased composition (low complexity). Disordered stretches follow at residues 524–555 (MQQA…QQQQ), 575–599 (QIQQ…QMIQ), 656–706 (LQRQ…VITP), 753–848 (TVGP…PLPI), and 867–918 (NVKS…KEDD). The segment covering 534–548 (QQQHQHHQQQQHQHQ) has biased composition (basic residues). The span at 580 to 590 (MRIASQMSQHP) shows a compositional bias: polar residues. Low complexity-rich tracts occupy residues 678 to 691 (SAAN…ASMA) and 753 to 797 (TVGP…SGTT). A compositionally biased stretch (basic and acidic residues) spans 821–830 (KTERTKDGRR). Over residues 870–889 (SEPQSDNLSSCTNPNSRATL) the composition is skewed to polar residues. The PHD-type zinc finger occupies 921 to 968 (EDWCAVCQNGGELLCCDHCPKVFHITCHIPTLKSSPSGDWMCTFCRNL). In terms of domain architecture, Bromo spans 991–1114 (AMSPEEQRRC…LYFEERLLEI (124 aa)). The segment at 1128 to 1147 (TQIEAEKEDSDDSDDDIIQP) is disordered. The span at 1133–1144 (EKEDSDDSDDDI) shows a compositional bias: acidic residues.

It localises to the nucleus. The enzyme catalyses S-ubiquitinyl-[E2 ubiquitin-conjugating enzyme]-L-cysteine + [acceptor protein]-L-lysine = [E2 ubiquitin-conjugating enzyme]-L-cysteine + N(6)-ubiquitinyl-[acceptor protein]-L-lysine.. Its pathway is protein modification; protein ubiquitination. Its function is as follows. May act as an E3 ubiquitin-protein ligase and a transcriptional repressor. Involved in the regulation of embryonic and adult hematopoiesis. Required for normal development and survival of both committed erythroid progenitor cells and posterior mesenchymal cells. This is E3 ubiquitin-protein ligase TRIM33 (trim33) from Danio rerio (Zebrafish).